A 343-amino-acid polypeptide reads, in one-letter code: Biotin synthase (343 aa).

A Radical SAM core domain is found at 36–254 (RQVQVSTLLS…IAVARIMMPR (219 aa)). The [4Fe-4S] cluster site is built by C51, C55, and C58. C95, C126, C186, and R258 together coordinate [2Fe-2S] cluster.

This sequence belongs to the radical SAM superfamily. Biotin synthase family. Homodimer. Requires [4Fe-4S] cluster as cofactor. [2Fe-2S] cluster is required as a cofactor.

It catalyses the reaction (4R,5S)-dethiobiotin + (sulfur carrier)-SH + 2 reduced [2Fe-2S]-[ferredoxin] + 2 S-adenosyl-L-methionine = (sulfur carrier)-H + biotin + 2 5'-deoxyadenosine + 2 L-methionine + 2 oxidized [2Fe-2S]-[ferredoxin]. Its pathway is cofactor biosynthesis; biotin biosynthesis; biotin from 7,8-diaminononanoate: step 2/2. Functionally, catalyzes the conversion of dethiobiotin (DTB) to biotin by the insertion of a sulfur atom into dethiobiotin via a radical-based mechanism. This chain is Biotin synthase, found in Erwinia tasmaniensis (strain DSM 17950 / CFBP 7177 / CIP 109463 / NCPPB 4357 / Et1/99).